We begin with the raw amino-acid sequence, 338 residues long: Heat-inducible transcription repressor HrcA (338 aa).

Belongs to the HrcA family.

Functionally, negative regulator of class I heat shock genes (grpE-dnaK-dnaJ and groELS operons). Prevents heat-shock induction of these operons. This chain is Heat-inducible transcription repressor HrcA, found in Nitrosomonas europaea (strain ATCC 19718 / CIP 103999 / KCTC 2705 / NBRC 14298).